The sequence spans 363 residues: 3-methyl-D-ornithine--L-lysine ligase (363 aa).

Residue K10 participates in ATP binding. Residue 11-12 participates in L-lysine binding; that stretch reads LQ. Residues D31, 49–50, and 72–73 each bind ATP; these read DV and EN. E72 serves as a coordination point for L-lysine. Residues K104, K131, S138, and 160-163 each bind ADP; that span reads EEYV. Residues 169–171 and D225 each bind D-ornithine; that span reads SLE. The Mg(2+) site is built by E227, E239, and D241. E239 contacts ADP. Residues 243–248 and E302 contribute to the D-ornithine site; that span reads RFPSQT. 2 residues coordinate L-lysine: S246 and E302.

It belongs to the PylC family. It depends on Mg(2+) as a cofactor.

The enzyme catalyses (3R)-3-methyl-D-ornithine + L-lysine + ATP = (3R)-3-methyl-D-ornithyl-N(6)-L-lysine + ADP + phosphate + H(+). It participates in amino-acid biosynthesis; L-pyrrolysine biosynthesis. Functionally, is required for the biosynthesis of pyrrolysine. Catalyzes the ATP-dependent ligation between (3R)-3-methyl-D-ornithine and L-lysine, leading to (3R)-3-methyl-D-ornithyl-N6-L-lysine. The protein is 3-methyl-D-ornithine--L-lysine ligase of Methanosarcina barkeri (strain Fusaro / DSM 804).